The primary structure comprises 155 residues: D-aminoacyl-tRNA deacylase (155 aa).

A Gly-cisPro motif, important for rejection of L-amino acids motif is present at residues 137-138; sequence GP.

It belongs to the DTD family. Homodimer.

The protein localises to the cytoplasm. The enzyme catalyses glycyl-tRNA(Ala) + H2O = tRNA(Ala) + glycine + H(+). It carries out the reaction a D-aminoacyl-tRNA + H2O = a tRNA + a D-alpha-amino acid + H(+). An aminoacyl-tRNA editing enzyme that deacylates mischarged D-aminoacyl-tRNAs. Also deacylates mischarged glycyl-tRNA(Ala), protecting cells against glycine mischarging by AlaRS. Acts via tRNA-based rather than protein-based catalysis; rejects L-amino acids rather than detecting D-amino acids in the active site. By recycling D-aminoacyl-tRNA to D-amino acids and free tRNA molecules, this enzyme counteracts the toxicity associated with the formation of D-aminoacyl-tRNA entities in vivo and helps enforce protein L-homochirality. The polypeptide is D-aminoacyl-tRNA deacylase (Geotalea uraniireducens (strain Rf4) (Geobacter uraniireducens)).